Consider the following 394-residue polypeptide: MRSLSIFGATGSIGESTFDLVMRKGGPEAFRTVALTGGRNIRRLAEMARALKAELAVTAHEDCLPALREALAGTGTEVAGGAQAIAEAADRPADWTMSAIVGAAGLVPGMRALKHGRTLALANKESLVTAGQLLMRTAEENGATILPVDSEHSAVFQALAGEDTACVERVIITASGGPFRDWSLERIRACTVAEAQAHPNWSMGQRISIDSASMFNKALELIETREFFGFEPDRIEAVVHPQSIVHAMVGFCDGGLMAHLGPADMRHAIGFALNWPGRGEVPVARIDLAQIASLTFQKPDEERFPALRLARDVMAARGLSGAAFNAAKEIALDHFIAGRIGFLDMAAVVEETLAGVSTDPLFGKVPDALEEVLAMDHLARRAAEEAAGLRQQKR.

NADPH contacts are provided by T10, G11, S12, I13, G38, R39, N40, and N123. 1-deoxy-D-xylulose 5-phosphate is bound at residue K124. NADPH is bound at residue E125. Residue D149 participates in Mn(2+) binding. 1-deoxy-D-xylulose 5-phosphate-binding residues include S150, E151, S175, and H198. E151 lines the Mn(2+) pocket. An NADPH-binding site is contributed by G204. 1-deoxy-D-xylulose 5-phosphate contacts are provided by S211, N216, K217, and E220. A Mn(2+)-binding site is contributed by E220.

The protein belongs to the DXR family. The cofactor is Mg(2+). Mn(2+) serves as cofactor.

The enzyme catalyses 2-C-methyl-D-erythritol 4-phosphate + NADP(+) = 1-deoxy-D-xylulose 5-phosphate + NADPH + H(+). It functions in the pathway isoprenoid biosynthesis; isopentenyl diphosphate biosynthesis via DXP pathway; isopentenyl diphosphate from 1-deoxy-D-xylulose 5-phosphate: step 1/6. In terms of biological role, catalyzes the NADPH-dependent rearrangement and reduction of 1-deoxy-D-xylulose-5-phosphate (DXP) to 2-C-methyl-D-erythritol 4-phosphate (MEP). The protein is 1-deoxy-D-xylulose 5-phosphate reductoisomerase of Cereibacter sphaeroides (strain ATCC 17029 / ATH 2.4.9) (Rhodobacter sphaeroides).